A 338-amino-acid polypeptide reads, in one-letter code: DNA-directed RNA polymerase subunit alpha (338 aa).

Positions 1–234 (MIQKNWQELI…DQLQLFINFE (234 aa)) are alpha N-terminal domain (alpha-NTD). An alpha C-terminal domain (alpha-CTD) region spans residues 250–338 (FNKNLLRKVD…ELAKKLEEPY (89 aa)).

The protein belongs to the RNA polymerase alpha chain family. As to quaternary structure, homodimer. The RNAP catalytic core consists of 2 alpha, 1 beta, 1 beta' and 1 omega subunit. When a sigma factor is associated with the core the holoenzyme is formed, which can initiate transcription.

It catalyses the reaction RNA(n) + a ribonucleoside 5'-triphosphate = RNA(n+1) + diphosphate. In terms of biological role, DNA-dependent RNA polymerase catalyzes the transcription of DNA into RNA using the four ribonucleoside triphosphates as substrates. In Paramagnetospirillum magneticum (strain ATCC 700264 / AMB-1) (Magnetospirillum magneticum), this protein is DNA-directed RNA polymerase subunit alpha.